Reading from the N-terminus, the 423-residue chain is TNF receptor-associated factor family protein DDB_G0277243 (423 aa).

An RING-type; degenerate zinc finger spans residues 20-66 (CSICVDPVLNSLPLEQHQALSCKNGHLLCQACWGKQLALRKECCICK). TRAF-type zinc fingers lie at residues 124 to 179 (SHLR…NDMP) and 180 to 237 (THIE…CYLS). The MATH domain occupies 287-411 (RYKGNWTIEN…DGKLTINIDV (125 aa)).

Belongs to the TNF receptor-associated factor family. A subfamily.

Its subcellular location is the cytoplasm. Probable adapter protein and signal transducer that links members of the tumor necrosis factor receptor family to different signaling pathways by association with the receptor cytoplasmic domain and kinases. This is TNF receptor-associated factor family protein DDB_G0277243 from Dictyostelium discoideum (Social amoeba).